The sequence spans 401 residues: Nicotinate phosphoribosyltransferase (401 aa).

Position 221 is a phosphohistidine; by autocatalysis (histidine 221).

This sequence belongs to the NAPRTase family. In terms of processing, transiently phosphorylated on a His residue during the reaction cycle. Phosphorylation strongly increases the affinity for substrates and increases the rate of nicotinate D-ribonucleotide production. Dephosphorylation regenerates the low-affinity form of the enzyme, leading to product release.

The enzyme catalyses nicotinate + 5-phospho-alpha-D-ribose 1-diphosphate + ATP + H2O = nicotinate beta-D-ribonucleotide + ADP + phosphate + diphosphate. The protein operates within cofactor biosynthesis; NAD(+) biosynthesis; nicotinate D-ribonucleotide from nicotinate: step 1/1. Catalyzes the synthesis of beta-nicotinate D-ribonucleotide from nicotinate and 5-phospho-D-ribose 1-phosphate at the expense of ATP. The polypeptide is Nicotinate phosphoribosyltransferase (Yersinia enterocolitica serotype O:8 / biotype 1B (strain NCTC 13174 / 8081)).